Reading from the N-terminus, the 97-residue chain is Small ribosomal subunit protein bS20 (97 aa).

Over residues 76-85 (RNNGARKKAG) the composition is skewed to basic residues. A disordered region spans residues 76 to 97 (RNNGARKKAGLAKALQKVSQAS). The segment covering 86 to 97 (LAKALQKVSQAS) has biased composition (low complexity).

This sequence belongs to the bacterial ribosomal protein bS20 family.

Its function is as follows. Binds directly to 16S ribosomal RNA. This chain is Small ribosomal subunit protein bS20, found in Microcystis aeruginosa (strain NIES-843 / IAM M-2473).